We begin with the raw amino-acid sequence, 171 residues long: Sigma intracellular receptor 2 (171 aa).

The Cytoplasmic segment spans residues 1-6 (MAVCAR). Residues 7-27 (LLEWIFFFYFFSHIPITLLVD) traverse the membrane as a helical segment. One can recognise an EXPERA domain in the interval 8–153 (LEWIFFFYFF…PYLLVPVLLL (146 aa)). Residues 28–66 (LQAVLPPSLYPQELLDLMKWYTVAFKDHLMANPPPWFKS) are Lumenal-facing. A helical membrane pass occupies residues 67–87 (FVYCEAILQLPFFPVAAYAFF). Isoleucine 73 and glutamine 75 together coordinate cholesterol. Residues 88 to 97 (KGGCKWIRIP) lie on the Cytoplasmic side of the membrane. A helical transmembrane segment spans residues 98–118 (AIVYSAHVATTVIAIIGHILF). Residues 119-137 (GEFPKSDVIAPLTQKDRLT) are Lumenal-facing. Residues 138-158 (LVSIYAPYLLVPVLLLLTMLF) traverse the membrane as a helical segment. The Cytoplasmic segment spans residues 159 to 171 (SPRYRQEEKRKRK). Positions 167 to 171 (KRKRK) match the ER retention motif motif.

Belongs to the TMEM97/sigma-2 receptor family. In terms of assembly, homodimer.

The protein localises to the rough endoplasmic reticulum membrane. It localises to the nucleus membrane. In terms of biological role, sigma-2 receptor which contributes to ameliorate dysfunctional cellular processes and slow degenerative progression by regulating cell functions including cholesterol biosynthesis/trafficking, membrane trafficking, autophagy, lipid membrane-bound protein trafficking, and receptor stabilization at the cell surface. Forms a ternary complex with PGRMC1 receptor and low density lipoprotein receptor/LDLR at the plasma membrane, which increases LDLR-mediated LDL cholesterol internalization. Decreases lysosomal sterol transporter NPC1 availability to the cell, probably through NPC1-binding, hence controlling lipid transport, including cholesterol and LBPA, outside of late endosome/lysosome. Binds regio- and stereoselective ligand 20(S)-hydroxycholesterol (20(S)-OHC), thereby linking OHC binding to cholesterol homeostasis. Also able to bind cholesterol. Binds histatin 1 (Hst 1)/HN1 salivary peptide at the ER membrane, which is critical for increasing mitochondria-ER contacts and stimulating Hst1 wound healing properties. May alter the activity of some cytochrome P450 proteins. Although shows homologies with sterol isomerases (EXPERA domain), not able to catalyze sterol isomerization. However, may act as sensors of these molecules. Acts as a quality control factor in the ER, promoting the proteolytic degradation of nonproductive and extramitochondrial precursor proteins in the ER membrane thus removing them from the ER surface. The chain is Sigma intracellular receptor 2 (tmem97) from Xenopus tropicalis (Western clawed frog).